We begin with the raw amino-acid sequence, 289 residues long: Nodulation protein NolT (289 aa).

A signal peptide spans 1–33 (MFGSAHGDTTSSDTSGRRPLRLVVLPLLLALSS). A lipid anchor (N-palmitoyl cysteine) is attached at cysteine 34. Cysteine 34 is lipidated: S-diacylglycerol cysteine. The chain crosses the membrane as a helical span at residues 233–253 (VAVGVSAAVFAVTCYLLFIVL).

The protein belongs to the YscJ lipoprotein family.

Its subcellular location is the cell outer membrane. In Sinorhizobium fredii (strain NBRC 101917 / NGR234), this protein is Nodulation protein NolT (nolT).